The following is a 296-amino-acid chain: Giardin subunit alpha-2 (296 aa).

Annexin repeat units lie at residues 2–71, 73–143, 153–223, and 226–293; these read PKLS…MDLF, DRHE…MEKW, GSPD…AHFA, and GMHK…TLWR.

This sequence belongs to the annexin family. Giardin subunit alpha subfamily.

It localises to the cytoplasm. Its subcellular location is the cytoskeleton. In terms of biological role, giardins are involved in parasite attachment to the intestinal mucosa and in the cytoskeletal disassembly and reassembly that marks the transition from infectious trophozoite to transmissible cyst. They may interact with other cytoskeletal proteins such as microtubules in the microribbons or crossbridges, to maintain the integrity of the ventral disk. The protein is Giardin subunit alpha-2 of Giardia intestinalis (Giardia lamblia).